The following is a 93-amino-acid chain: Parbolysin P5 (93 aa).

Disulfide bonds link Cys-16-Cys-37, Cys-22-Cys-33, and Cys-47-Cys-60.

It belongs to the worm cytolysin family. In terms of tissue distribution, localized within the skin and proboscis and are most readily isolated from body mucus secretions.

Its subcellular location is the secreted. In terms of biological role, cytolysin that shows hemolytic activity (on bovine erythrocytes, HC(50)=5.75 mg/ml). This hemolytic activity is completely inhibited by small unilamelar vesicles composed of PC/PG, PC/PI and PC/PS in 1:1 molar ratios (with at least 100 mg/ml concentration). In Parborlasia corrugatus (Antarctic nemertean worm), this protein is Parbolysin P5.